A 409-amino-acid chain; its full sequence is Putative kinase Y4dM (409 aa).

The active-site Proton acceptor is Asp293.

This sequence belongs to the HipA Ser/Thr kinase family.

The polypeptide is Putative kinase Y4dM (Sinorhizobium fredii (strain NBRC 101917 / NGR234)).